A 582-amino-acid chain; its full sequence is Arginine--tRNA ligase (582 aa).

The 'HIGH' region signature appears at 136–146; the sequence is ANPTGPMHMGH.

This sequence belongs to the class-I aminoacyl-tRNA synthetase family. In terms of assembly, monomer.

Its subcellular location is the cytoplasm. The enzyme catalyses tRNA(Arg) + L-arginine + ATP = L-arginyl-tRNA(Arg) + AMP + diphosphate. This is Arginine--tRNA ligase from Novosphingobium aromaticivorans (strain ATCC 700278 / DSM 12444 / CCUG 56034 / CIP 105152 / NBRC 16084 / F199).